The sequence spans 494 residues: 1-aminocyclopropane-1-carboxylate synthase 2 (494 aa).

K279 is modified (N6-(pyridoxal phosphate)lysine). Positions 474–494 (NVLNSPHTMSPHSPLVRARTY) are disordered. The segment covering 475 to 484 (VLNSPHTMSP) has biased composition (polar residues).

Belongs to the class-I pyridoxal-phosphate-dependent aminotransferase family. As to quaternary structure, homodimer. Pyridoxal 5'-phosphate is required as a cofactor.

The catalysed reaction is S-adenosyl-L-methionine = 1-aminocyclopropane-1-carboxylate + S-methyl-5'-thioadenosine + H(+). Its pathway is alkene biosynthesis; ethylene biosynthesis via S-adenosyl-L-methionine; ethylene from S-adenosyl-L-methionine: step 1/2. Functionally, catalyzes the formation of 1-aminocyclopropane-1-carboxylate, a direct precursor of ethylene in higher plants. In Cucurbita pepo (Vegetable marrow), this protein is 1-aminocyclopropane-1-carboxylate synthase 2 (ACS2).